The sequence spans 280 residues: Shikimate dehydrogenase (NADP(+)) (280 aa).

Shikimate is bound by residues 18-20 (SRS) and threonine 65. The Proton acceptor role is filled by lysine 69. Asparagine 90 and aspartate 105 together coordinate shikimate. NADP(+)-binding positions include 130-134 (GAGGA), 154-159 (NRTLAR), and leucine 219. Shikimate is bound at residue tyrosine 221. Residue glycine 242 coordinates NADP(+).

Belongs to the shikimate dehydrogenase family. As to quaternary structure, homodimer.

The enzyme catalyses shikimate + NADP(+) = 3-dehydroshikimate + NADPH + H(+). Its pathway is metabolic intermediate biosynthesis; chorismate biosynthesis; chorismate from D-erythrose 4-phosphate and phosphoenolpyruvate: step 4/7. Functionally, involved in the biosynthesis of the chorismate, which leads to the biosynthesis of aromatic amino acids. Catalyzes the reversible NADPH linked reduction of 3-dehydroshikimate (DHSA) to yield shikimate (SA). This Mesorhizobium japonicum (strain LMG 29417 / CECT 9101 / MAFF 303099) (Mesorhizobium loti (strain MAFF 303099)) protein is Shikimate dehydrogenase (NADP(+)).